A 589-amino-acid polypeptide reads, in one-letter code: Vomeromodulin (589 aa).

Positions 1–29 (MWVLQALAIMLSIQAGVLDLVEVPPVVRS) are cleaved as a signal peptide. 2 disordered regions span residues 49-71 (GLNDPAKNRMLPPKRPGAPSRGG) and 146-170 (LLGKEGNEDPSKPSSGSKATGGLGQ). Residues Asn419 and Asn437 are each glycosylated (N-linked (GlcNAc...) asparagine).

Post-translationally, N-glycosylated. The N-glycans consist mainly of complex sialylated and fucosylated biantennary structures. Abundant in the lateral nasal glands. Also present in the posterior septal and vomeronasal glands.

It is found in the secreted. This chain is Vomeromodulin, found in Rattus norvegicus (Rat).